Consider the following 280-residue polypeptide: Elongation factor Ts (280 aa).

Residues 79–82 (TDFV) form an involved in Mg(2+) ion dislocation from EF-Tu region.

This sequence belongs to the EF-Ts family.

The protein resides in the cytoplasm. Its function is as follows. Associates with the EF-Tu.GDP complex and induces the exchange of GDP to GTP. It remains bound to the aminoacyl-tRNA.EF-Tu.GTP complex up to the GTP hydrolysis stage on the ribosome. This Treponema denticola (strain ATCC 35405 / DSM 14222 / CIP 103919 / JCM 8153 / KCTC 15104) protein is Elongation factor Ts.